The following is a 480-amino-acid chain: ATP synthase subunit beta 1 (480 aa).

An ATP-binding site is contributed by 154–161; sequence GGAGVGKT.

It belongs to the ATPase alpha/beta chains family. F-type ATPases have 2 components, CF(1) - the catalytic core - and CF(0) - the membrane proton channel. CF(1) has five subunits: alpha(3), beta(3), gamma(1), delta(1), epsilon(1). CF(0) has four main subunits: a(1), b(1), b'(1) and c(9-12).

Its subcellular location is the cell inner membrane. It catalyses the reaction ATP + H2O + 4 H(+)(in) = ADP + phosphate + 5 H(+)(out). Functionally, produces ATP from ADP in the presence of a proton gradient across the membrane. The catalytic sites are hosted primarily by the beta subunits. This chain is ATP synthase subunit beta 1, found in Bradyrhizobium sp. (strain BTAi1 / ATCC BAA-1182).